The following is a 201-amino-acid chain: Potassium-transporting ATPase KdpC subunit (201 aa).

The chain crosses the membrane as a helical span at residues 10–30; the sequence is VLLVALTAVTGLAYPLAVTGI.

Belongs to the KdpC family. The system is composed of three essential subunits: KdpA, KdpB and KdpC.

Its subcellular location is the cell inner membrane. Functionally, part of the high-affinity ATP-driven potassium transport (or Kdp) system, which catalyzes the hydrolysis of ATP coupled with the electrogenic transport of potassium into the cytoplasm. This subunit acts as a catalytic chaperone that increases the ATP-binding affinity of the ATP-hydrolyzing subunit KdpB by the formation of a transient KdpB/KdpC/ATP ternary complex. This chain is Potassium-transporting ATPase KdpC subunit, found in Methylorubrum extorquens (strain PA1) (Methylobacterium extorquens).